Reading from the N-terminus, the 397-residue chain is Protein shisa-8 (397 aa).

The N-terminal stretch at 1-38 (MARAGARGLLGGRRPPGLRLALALRLALLLARPPSGRA) is a signal peptide. At 39-138 (GAPEAQGPAA…APRDPGRERS (100 aa)) the chain is on the extracellular side. An N-linked (GlcNAc...) asparagine glycan is attached at Asn75. The interval 117 to 136 (TGRPPARARDTAAPRDPGRE) is disordered. Residues 123-136 (RARDTAAPRDPGRE) are compositionally biased toward basic and acidic residues. The helical transmembrane segment at 139–159 (HTAVYAVCGVAALLVLAGIGA) threads the bilayer. Residues 160-397 (RLGLERAHSP…RTNSKTEVTV (238 aa)) are Cytoplasmic-facing. 2 disordered regions span residues 182–250 (LLKQ…GGSL) and 281–303 (FPAL…PDLP). Pro residues-rich tracts occupy residues 188-197 (PQEPLPPTLG) and 288-303 (PRQP…PDLP).

Belongs to the shisa family. In terms of assembly, interacts with AMPAR subunits GRIA1 and GRIA2.

The protein localises to the membrane. Functionally, may regulate trafficking and current kinetics of AMPA-type glutamate receptor (AMPAR) at synapses. The chain is Protein shisa-8 from Homo sapiens (Human).